The primary structure comprises 261 residues: Cytochrome c oxidase subunit 3 (261 aa).

Topologically, residues Met1–Pro15 are mitochondrial matrix. A helical transmembrane segment spans residues Trp16–Trp34. The Mitochondrial intermembrane portion of the chain corresponds to Phe35–Thr40. The helical transmembrane segment at Thr41 to Thr66 threads the bilayer. The Mitochondrial matrix portion of the chain corresponds to Phe67–Thr72. The helical transmembrane segment at Pro73–Ser105 threads the bilayer. Topologically, residues Leu106–Glu128 are mitochondrial intermembrane. A helical membrane pass occupies residues Val129–Met152. Residues Glu153–Asn155 are Mitochondrial matrix-facing. The helical transmembrane segment at Arg156–Glu183 threads the bilayer. The Mitochondrial intermembrane segment spans residues Ala184–Asp190. A helical transmembrane segment spans residues Gly191 to Leu223. The Mitochondrial matrix portion of the chain corresponds to Lys224–His232. The helical transmembrane segment at Phe233–Ile256 threads the bilayer. The Mitochondrial intermembrane segment spans residues Tyr257 to Ser261.

Belongs to the cytochrome c oxidase subunit 3 family. Component of the cytochrome c oxidase (complex IV, CIV), a multisubunit enzyme composed of 14 subunits. The complex is composed of a catalytic core of 3 subunits MT-CO1, MT-CO2 and MT-CO3, encoded in the mitochondrial DNA, and 11 supernumerary subunits COX4I, COX5A, COX5B, COX6A, COX6B, COX6C, COX7A, COX7B, COX7C, COX8 and NDUFA4, which are encoded in the nuclear genome. The complex exists as a monomer or a dimer and forms supercomplexes (SCs) in the inner mitochondrial membrane with NADH-ubiquinone oxidoreductase (complex I, CI) and ubiquinol-cytochrome c oxidoreductase (cytochrome b-c1 complex, complex III, CIII), resulting in different assemblies (supercomplex SCI(1)III(2)IV(1) and megacomplex MCI(2)III(2)IV(2)).

It localises to the mitochondrion inner membrane. It catalyses the reaction 4 Fe(II)-[cytochrome c] + O2 + 8 H(+)(in) = 4 Fe(III)-[cytochrome c] + 2 H2O + 4 H(+)(out). Functionally, component of the cytochrome c oxidase, the last enzyme in the mitochondrial electron transport chain which drives oxidative phosphorylation. The respiratory chain contains 3 multisubunit complexes succinate dehydrogenase (complex II, CII), ubiquinol-cytochrome c oxidoreductase (cytochrome b-c1 complex, complex III, CIII) and cytochrome c oxidase (complex IV, CIV), that cooperate to transfer electrons derived from NADH and succinate to molecular oxygen, creating an electrochemical gradient over the inner membrane that drives transmembrane transport and the ATP synthase. Cytochrome c oxidase is the component of the respiratory chain that catalyzes the reduction of oxygen to water. Electrons originating from reduced cytochrome c in the intermembrane space (IMS) are transferred via the dinuclear copper A center (CU(A)) of subunit 2 and heme A of subunit 1 to the active site in subunit 1, a binuclear center (BNC) formed by heme A3 and copper B (CU(B)). The BNC reduces molecular oxygen to 2 water molecules using 4 electrons from cytochrome c in the IMS and 4 protons from the mitochondrial matrix. The sequence is that of Cytochrome c oxidase subunit 3 (MT-CO3) from Gazella saudiya (Saudi gazelle).